A 432-amino-acid chain; its full sequence is uncharacterized protein (432 aa).

This is an uncharacterized protein from Methanocaldococcus jannaschii (strain ATCC 43067 / DSM 2661 / JAL-1 / JCM 10045 / NBRC 100440) (Methanococcus jannaschii).